The primary structure comprises 336 residues: Dihydroorotate dehydrogenase (quinone) (336 aa).

FMN is bound by residues 62-66 (AGLDK) and threonine 86. Residue lysine 66 participates in substrate binding. 111 to 115 (NRMGF) contacts substrate. Residues asparagine 139 and asparagine 172 each coordinate FMN. A substrate-binding site is contributed by asparagine 172. Serine 175 acts as the Nucleophile in catalysis. Asparagine 177 is a substrate binding site. The FMN site is built by lysine 217 and threonine 245. 246 to 247 (NT) contributes to the substrate binding site. FMN contacts are provided by residues glycine 268, glycine 297, and 318–319 (YS).

It belongs to the dihydroorotate dehydrogenase family. Type 2 subfamily. Monomer. The cofactor is FMN.

It localises to the cell membrane. The enzyme catalyses (S)-dihydroorotate + a quinone = orotate + a quinol. It functions in the pathway pyrimidine metabolism; UMP biosynthesis via de novo pathway; orotate from (S)-dihydroorotate (quinone route): step 1/1. Functionally, catalyzes the conversion of dihydroorotate to orotate with quinone as electron acceptor. In Proteus mirabilis (strain HI4320), this protein is Dihydroorotate dehydrogenase (quinone).